A 260-amino-acid chain; its full sequence is 4-hydroxy-tetrahydrodipicolinate reductase (260 aa).

Residues 12 to 17, 92 to 94, and 118 to 121 contribute to the NAD(+) site; these read GFRGKM, GTT, and APNF. His148 functions as the Proton donor/acceptor in the catalytic mechanism. A (S)-2,3,4,5-tetrahydrodipicolinate-binding site is contributed by His149. Lys152 serves as the catalytic Proton donor. 158 to 159 is a (S)-2,3,4,5-tetrahydrodipicolinate binding site; the sequence is GT.

It belongs to the DapB family.

The protein localises to the cytoplasm. It carries out the reaction (S)-2,3,4,5-tetrahydrodipicolinate + NAD(+) + H2O = (2S,4S)-4-hydroxy-2,3,4,5-tetrahydrodipicolinate + NADH + H(+). The enzyme catalyses (S)-2,3,4,5-tetrahydrodipicolinate + NADP(+) + H2O = (2S,4S)-4-hydroxy-2,3,4,5-tetrahydrodipicolinate + NADPH + H(+). The protein operates within amino-acid biosynthesis; L-lysine biosynthesis via DAP pathway; (S)-tetrahydrodipicolinate from L-aspartate: step 4/4. Its function is as follows. Catalyzes the conversion of 4-hydroxy-tetrahydrodipicolinate (HTPA) to tetrahydrodipicolinate. The chain is 4-hydroxy-tetrahydrodipicolinate reductase from Lactococcus lactis subsp. cremoris (strain SK11).